Reading from the N-terminus, the 178-residue chain is Ribonuclease M5 (178 aa).

The region spanning 4–100 is the Toprim domain; sequence NEFIVVEGRD…KIGVEHADLI (97 aa). Residues E10, D56, and D58 each coordinate Mg(2+).

This sequence belongs to the ribonuclease M5 family. Mg(2+) serves as cofactor.

Its subcellular location is the cytoplasm. It catalyses the reaction Endonucleolytic cleavage of RNA, removing 21 and 42 nucleotides, respectively, from the 5'- and 3'-termini of a 5S-rRNA precursor.. Its function is as follows. Required for correct processing of both the 5' and 3' ends of 5S rRNA precursor. Cleaves both sides of a double-stranded region yielding mature 5S rRNA in one step. This Staphylococcus aureus (strain NCTC 8325 / PS 47) protein is Ribonuclease M5.